Consider the following 273-residue polypeptide: Octanoyl-[GcvH]:protein N-octanoyltransferase (273 aa).

A BPL/LPL catalytic domain is found at 40-245 (ATEGAAIRSW…SLMELGATLT (206 aa)). The active-site Acyl-thioester intermediate is the C144.

It belongs to the octanoyltransferase LipL family.

It catalyses the reaction N(6)-octanoyl-L-lysyl-[glycine-cleavage complex H protein] + L-lysyl-[lipoyl-carrier protein] = N(6)-octanoyl-L-lysyl-[lipoyl-carrier protein] + L-lysyl-[glycine-cleavage complex H protein]. The protein operates within protein modification; protein lipoylation via endogenous pathway; protein N(6)-(lipoyl)lysine from octanoyl-[acyl-carrier-protein]. Its function is as follows. Catalyzes the amidotransfer (transamidation) of the octanoyl moiety from octanoyl-GcvH to the lipoyl domain of the E2 subunit of lipoate-dependent enzymes. This is Octanoyl-[GcvH]:protein N-octanoyltransferase from Exiguobacterium sibiricum (strain DSM 17290 / CCUG 55495 / CIP 109462 / JCM 13490 / 255-15).